Consider the following 127-residue polypeptide: Classical arabinogalactan protein 10 (127 aa).

Residues 1–21 (MASKSVVVLLFLALIASSAIA) form the signal peptide. Pyrrolidone carboxylic acid is present on glutamine 22. The disordered stretch occupies residues 22-107 (QAPGPAPTRS…TGSTPVDNNN (86 aa)). 4-hydroxyproline occurs at positions 24, 26, 28, 32, and 36. Proline 24, proline 26, proline 28, proline 32, and proline 36 each carry an O-linked (Ara...) hydroxyproline glycan. Composition is skewed to pro residues over residues 25–39 (GPAPTRSPLPSPAQP), 48–58 (SITPTPTPTPS), and 66–86 (VSPPAGSPLPSSASPPAPPTS). The span at 98–107 (TGSTPVDNNN) shows a compositional bias: polar residues. Residue asparagine 107 is the site of GPI-anchor amidated asparagine attachment. Positions 108 to 127 (AATLAAGSLAGFVFVASLLL) are cleaved as a propeptide — removed in mature form.

This sequence belongs to the classical AGP family. In terms of processing, O-glycosylated on hydroxyprolines; noncontiguous hydroxylproline residues are glycosylated with arabinogalactan. Predominantly expressed in flowers and at a lower level in roots and siliques.

The protein localises to the cell membrane. Proteoglycan that seems to be implicated in diverse developmental roles such as differentiation, cell-cell recognition, embryogenesis and programmed cell death. This Arabidopsis thaliana (Mouse-ear cress) protein is Classical arabinogalactan protein 10 (AGP10).